We begin with the raw amino-acid sequence, 611 residues long: Dihydroxy-acid dehydratase (611 aa).

Residue Asp81 coordinates Mg(2+). [2Fe-2S] cluster is bound at residue Cys122. The Mg(2+) site is built by Asp123 and Lys124. Position 124 is an N6-carboxylysine (Lys124). Cys195 is a binding site for [2Fe-2S] cluster. Glu491 provides a ligand contact to Mg(2+). The Proton acceptor role is filled by Ser517.

The protein belongs to the IlvD/Edd family. In terms of assembly, homodimer. [2Fe-2S] cluster serves as cofactor. Requires Mg(2+) as cofactor.

It catalyses the reaction (2R)-2,3-dihydroxy-3-methylbutanoate = 3-methyl-2-oxobutanoate + H2O. The enzyme catalyses (2R,3R)-2,3-dihydroxy-3-methylpentanoate = (S)-3-methyl-2-oxopentanoate + H2O. It functions in the pathway amino-acid biosynthesis; L-isoleucine biosynthesis; L-isoleucine from 2-oxobutanoate: step 3/4. The protein operates within amino-acid biosynthesis; L-valine biosynthesis; L-valine from pyruvate: step 3/4. In terms of biological role, functions in the biosynthesis of branched-chain amino acids. Catalyzes the dehydration of (2R,3R)-2,3-dihydroxy-3-methylpentanoate (2,3-dihydroxy-3-methylvalerate) into 2-oxo-3-methylpentanoate (2-oxo-3-methylvalerate) and of (2R)-2,3-dihydroxy-3-methylbutanoate (2,3-dihydroxyisovalerate) into 2-oxo-3-methylbutanoate (2-oxoisovalerate), the penultimate precursor to L-isoleucine and L-valine, respectively. The polypeptide is Dihydroxy-acid dehydratase (Actinobacillus pleuropneumoniae serotype 3 (strain JL03)).